The primary structure comprises 308 residues: Aspartate carbamoyltransferase catalytic subunit (308 aa).

Arg-57 and Thr-58 together coordinate carbamoyl phosphate. L-aspartate is bound at residue Lys-86. Positions 107, 135, and 138 each coordinate carbamoyl phosphate. L-aspartate-binding residues include Arg-168 and Arg-228. Carbamoyl phosphate is bound by residues Leu-267 and Pro-268.

The protein belongs to the aspartate/ornithine carbamoyltransferase superfamily. ATCase family. Heterododecamer (2C3:3R2) of six catalytic PyrB chains organized as two trimers (C3), and six regulatory PyrI chains organized as three dimers (R2).

It catalyses the reaction carbamoyl phosphate + L-aspartate = N-carbamoyl-L-aspartate + phosphate + H(+). It functions in the pathway pyrimidine metabolism; UMP biosynthesis via de novo pathway; (S)-dihydroorotate from bicarbonate: step 2/3. Catalyzes the condensation of carbamoyl phosphate and aspartate to form carbamoyl aspartate and inorganic phosphate, the committed step in the de novo pyrimidine nucleotide biosynthesis pathway. This Leptospira interrogans serogroup Icterohaemorrhagiae serovar Lai (strain 56601) protein is Aspartate carbamoyltransferase catalytic subunit.